The chain runs to 353 residues: MKFALTGGGTGGHLSIAKALAIELEKQGIEAIYLGSTYGQDKEWFENSPLFSERYFFNTQGVVNKSFFKKIGSLFLQAKAAFKAKEILKKHQITHTISVGGFSAGPASFASLLNKIPLYIHEQNAIKGSLNRYLSPKAKAVFSSYAFKDKGHHVLTSYPVQNAFFDFARTRTEIKHILFLGGSQGAKAINEFALLNAPKLTKQGIKITHICGPNSYEQVRFFYQELGLLDKIELFAFHNNITEVMHRADLCVSRAGASSVWELCANGLPTIFIPYPFASNNHQYYNVLEFEKENLCYVAPQNELLPKKLFEVIRKLNQKDDQGNKNLTAISNQLQQKIAKDGAKTIIETILSA.

Residues 10–12 (TGG), N124, S183, and Q283 contribute to the UDP-N-acetyl-alpha-D-glucosamine site.

The protein belongs to the glycosyltransferase 28 family. MurG subfamily.

It is found in the cell inner membrane. It catalyses the reaction di-trans,octa-cis-undecaprenyl diphospho-N-acetyl-alpha-D-muramoyl-L-alanyl-D-glutamyl-meso-2,6-diaminopimeloyl-D-alanyl-D-alanine + UDP-N-acetyl-alpha-D-glucosamine = di-trans,octa-cis-undecaprenyl diphospho-[N-acetyl-alpha-D-glucosaminyl-(1-&gt;4)]-N-acetyl-alpha-D-muramoyl-L-alanyl-D-glutamyl-meso-2,6-diaminopimeloyl-D-alanyl-D-alanine + UDP + H(+). The protein operates within cell wall biogenesis; peptidoglycan biosynthesis. Cell wall formation. Catalyzes the transfer of a GlcNAc subunit on undecaprenyl-pyrophosphoryl-MurNAc-pentapeptide (lipid intermediate I) to form undecaprenyl-pyrophosphoryl-MurNAc-(pentapeptide)GlcNAc (lipid intermediate II). This chain is UDP-N-acetylglucosamine--N-acetylmuramyl-(pentapeptide) pyrophosphoryl-undecaprenol N-acetylglucosamine transferase, found in Helicobacter pylori (strain HPAG1).